The chain runs to 349 residues: Protein-glutamate methylesterase/protein-glutamine glutaminase 1 (349 aa).

The Response regulatory domain occupies 4–119 (RILVVDDSAV…KGFLEDSARR (116 aa)). Asp-53 bears the 4-aspartylphosphate mark. Residues 159-349 (PRAGRAELVV…VASAVLAWAR (191 aa)) form the CheB-type methylesterase domain. Residues Ser-172, His-198, and Asp-293 contribute to the active site.

It belongs to the CheB family. Post-translationally, phosphorylated by CheA. Phosphorylation of the N-terminal regulatory domain activates the methylesterase activity.

It is found in the cytoplasm. The catalysed reaction is [protein]-L-glutamate 5-O-methyl ester + H2O = L-glutamyl-[protein] + methanol + H(+). It catalyses the reaction L-glutaminyl-[protein] + H2O = L-glutamyl-[protein] + NH4(+). Involved in chemotaxis. Part of a chemotaxis signal transduction system that modulates chemotaxis in response to various stimuli. Catalyzes the demethylation of specific methylglutamate residues introduced into the chemoreceptors (methyl-accepting chemotaxis proteins or MCP) by CheR. Also mediates the irreversible deamidation of specific glutamine residues to glutamic acid. The protein is Protein-glutamate methylesterase/protein-glutamine glutaminase 1 of Anaeromyxobacter dehalogenans (strain 2CP-C).